The sequence spans 193 residues: 3-isopropylmalate dehydratase small subunit (193 aa).

It belongs to the LeuD family. LeuD type 1 subfamily. Heterodimer of LeuC and LeuD.

The catalysed reaction is (2R,3S)-3-isopropylmalate = (2S)-2-isopropylmalate. Its pathway is amino-acid biosynthesis; L-leucine biosynthesis; L-leucine from 3-methyl-2-oxobutanoate: step 2/4. Its function is as follows. Catalyzes the isomerization between 2-isopropylmalate and 3-isopropylmalate, via the formation of 2-isopropylmaleate. This is 3-isopropylmalate dehydratase small subunit from Listeria monocytogenes serovar 1/2a (strain ATCC BAA-679 / EGD-e).